Consider the following 197-residue polypeptide: UPF0301 protein A2cp1_4106 (197 aa).

This sequence belongs to the UPF0301 (AlgH) family.

This Anaeromyxobacter dehalogenans (strain 2CP-1 / ATCC BAA-258) protein is UPF0301 protein A2cp1_4106.